Consider the following 780-residue polypeptide: Protein SEY1 (780 aa).

At 1–680 (MDSKEEAIQL…KRSMIKTTTH (680 aa)) the chain is on the cytoplasmic side. The region spanning 35 to 265 (GVNYHVISVF…NEDYYFKPEY (231 aa)) is the GB1/RHD3-type G domain. 45 to 52 (GSQSSGKS) is a binding site for GTP. The stretch at 440-463 (EVKEEVVKRFENDLKETSDKLRVT) forms a coiled coil. Residues 681–701 (IPLWIYAIIVVLGWNEFMMVI) form a helical membrane-spanning segment. The Lumenal portion of the chain corresponds to 702 to 704 (RNP). Residues 705 to 725 (LFVTLTILILVSFYFINKFDL) form a helical membrane-spanning segment. The Cytoplasmic portion of the chain corresponds to 726 to 780 (WGPVKSVAQTAAGETIGTIKTKLRDFVLEEHEKTPKIQSEKSNSDSEKVVENEKS). Residues 756-780 (HEKTPKIQSEKSNSDSEKVVENEKS) are disordered.

Belongs to the TRAFAC class dynamin-like GTPase superfamily. GB1/RHD3 GTPase family. RHD3 subfamily.

It is found in the endoplasmic reticulum membrane. Functionally, cooperates with the reticulon proteins and tubule-shaping DP1 family proteins to generate and maintain the structure of the tubular endoplasmic reticulum network. Has GTPase activity, which is required for its function in ER organization. This Vanderwaltozyma polyspora (strain ATCC 22028 / DSM 70294 / BCRC 21397 / CBS 2163 / NBRC 10782 / NRRL Y-8283 / UCD 57-17) (Kluyveromyces polysporus) protein is Protein SEY1.